The sequence spans 227 residues: 6,7-dimethyl-8-ribityllumazine synthase, chloroplastic (227 aa).

A chloroplast-targeting transit peptide spans 1-71 (MKSLASPPCL…LRSSFVQTAA (71 aa)). 5-amino-6-(D-ribitylamino)uracil is bound by residues Phe94, 128–130 (SFE), and 152–154 (AVI). 157-158 (DT) provides a ligand contact to (2S)-2-hydroxy-3-oxobutyl phosphate. His160 serves as the catalytic Proton donor. A 5-amino-6-(D-ribitylamino)uracil-binding site is contributed by Phe185. Residue Arg199 participates in (2S)-2-hydroxy-3-oxobutyl phosphate binding.

Belongs to the DMRL synthase family. Oligomer forming an icosahedral capsid.

The protein resides in the plastid. The protein localises to the chloroplast. The enzyme catalyses (2S)-2-hydroxy-3-oxobutyl phosphate + 5-amino-6-(D-ribitylamino)uracil = 6,7-dimethyl-8-(1-D-ribityl)lumazine + phosphate + 2 H2O + H(+). It participates in cofactor biosynthesis; riboflavin biosynthesis; riboflavin from 2-hydroxy-3-oxobutyl phosphate and 5-amino-6-(D-ribitylamino)uracil: step 1/2. Catalyzes the formation of 6,7-dimethyl-8-ribityllumazine by condensation of 5-amino-6-(D-ribitylamino)uracil with 3,4-dihydroxy-2-butanone 4-phosphate. This is the penultimate step in the biosynthesis of riboflavin. This Arabidopsis thaliana (Mouse-ear cress) protein is 6,7-dimethyl-8-ribityllumazine synthase, chloroplastic.